Here is a 622-residue protein sequence, read N- to C-terminus: Pyranose 2-oxidase (622 aa).

A signal peptide spans 1 to 28; sequence MSASSSDPFHSFAKTSFTSKAAKRATAH. Residues 29–37 constitute a propeptide that is removed on maturation; that stretch reads SLPPLPGPG. H167 is subject to Tele-8alpha-FAD histidine. Residues Q449 and H451 each coordinate substrate. Residue H546 is the Proton acceptor of the active site. The active site involves N591.

It belongs to the GMC oxidoreductase family. In terms of assembly, homotetramer. FAD is required as a cofactor. In terms of processing, not glycosylated.

The protein localises to the periplasm. It carries out the reaction D-glucose + O2 = 2-dehydro-D-glucose + H2O2. Functionally, catalyzes the oxidation of various aldopyranoses and disaccharides on carbon-2 to the corresponding 2-keto sugars concomitant with the reduction of O(2) to H(2)O(2). Plays an important role in lignin degradation of wood rot fungi by supplying the essential cosubstrate H(2)O(2) for the ligninolytic peroxidases, lignin peroxidase and manganese-dependent peroxidase. The preferred substrate is D-glucose which is converted to 2-dehydro-D-glucose, an intermediate of a secondary metabolic pathway leading to the antibiotic cortalcerone. Also acts on D-xylose, together with D-glucose the major sugars derived from wood, on L-sorbose, D-galactose and 1,5-anhydroglucitol, a diagnostic marker of diabetes mellitus. The protein is Pyranose 2-oxidase (p2ox) of Phlebiopsis gigantea (White-rot fungus).